A 307-amino-acid chain; its full sequence is NAD(+) hydrolase TcpC (307 aa).

A helical membrane pass occupies residues 22–42 (YNILFFIFLSIAIPFLLFLAW). The TIR domain maps to 169–303 (THYDFFISHA…EIARELAEIA (135 aa)). NAD(+) is bound by residues 178-179 (AK) and Glu208. Glu244 is an active-site residue.

Interacts with host MYD88. Interacts with host TLR4.

The protein localises to the secreted. Its subcellular location is the membrane. It carries out the reaction NAD(+) + H2O = ADP-D-ribose + nicotinamide + H(+). It catalyses the reaction NADP(+) + H2O = ADP-D-ribose 2'-phosphate + nicotinamide + H(+). Virulence factor that suppresses host Toll-like receptor (TLR)-mediated cytokine production upon infection, thereby increasing bacterial burden in the urinary tract and promoting renal tissue damage. Acts as a NAD(+) hydrolase (NADase) by catalyzing cleavage of NAD(+) into ADP-D-ribose (ADPR) and nicotinamide. Also able to hydrolyze NADP(+), but not other NAD(+)-related molecules. The protein is NAD(+) hydrolase TcpC of Escherichia coli O6:H1 (strain CFT073 / ATCC 700928 / UPEC).